A 1361-amino-acid polypeptide reads, in one-letter code: Rho guanine nucleotide exchange factor 18 (1361 aa).

Disordered stretches follow at residues 33 to 88 (LQDL…SCSE), 131 to 156 (SGGGTPAESPGKECDSPKKRGRSRSV), and 244 to 292 (DGAG…ARER). Over residues 50–61 (PDSRPTGEEPGR) the composition is skewed to basic and acidic residues. A compositionally biased stretch (polar residues) spans 64–73 (LFSSLAGSQD). Residues 74-88 (LSRRRSWERSRSCSE) show a composition bias toward basic and acidic residues. Basic and acidic residues-rich tracts occupy residues 245–256 (GAGKNEKSDKST) and 271–292 (RQKEKGKSPAHLKDKGQDARER). The C2H2-type; degenerate zinc-finger motif lies at 310–334 (SSCPLCGKPFLSSASLKEHPRGTLL). Positions 348-368 (TVSQKGGPQPTPSPAGPGTQL) are disordered. In terms of domain architecture, DH spans 447 to 644 (KRQDVLYELM…KDIISQVDAK (198 aa)). The PH domain maps to 684 to 786 (QLHLEGMLCW…WMAHIQRAVE (103 aa)). Disordered regions lie at residues 893–980 (ANGQ…DPRL), 1143–1211 (LKKQ…RLAK), 1229–1264 (AAVQQQIPTKLAASTKGGKDKGGKSRGSQRWESSAS), and 1277–1361 (MGKD…VIFF). At T912 the chain carries Phosphothreonine. Position 921 is a phosphoserine (S921). Residues 1038–1148 (LEQERQRNFE…LLRRLKKQNT (111 aa)) adopt a coiled-coil conformation. A compositionally biased stretch (basic and acidic residues) spans 1191-1211 (YAERPEVARRDSAPTENRLAK). The segment covering 1254 to 1264 (RGSQRWESSAS) has biased composition (polar residues). Residues S1289 and S1291 each carry the phosphoserine modification. 2 stretches are compositionally biased toward pro residues: residues 1300–1317 (PAPPPDPGFPAPSPPPAD) and 1334–1344 (PGPPAPSPLPA). A compositionally biased stretch (basic and acidic residues) spans 1349–1361 (AKEDASKEDVIFF).

As to quaternary structure, interacts with SEPT9; the interaction may inhibit GEF activity. Interacts with Gbetagamma subunits GNB1 and GNG2. Interacts with EPB41L4B. Interacts with PATJ (via C-terminus). Expressed in all tissues tested with highest expression in kidney and pancreas. Weakly or not expressed in liver, skeletal muscle and testis. Isoform 1: Expressed in eosinophils. Isoform 2: Expressed in eosinophils. Isoform 3: Expressed in eosinophils. Isoform 4: Not detected in eosinophils.

The protein resides in the cytoplasm. The protein localises to the cytoskeleton. It localises to the cell membrane. Its subcellular location is the apical cell membrane. Its function is as follows. Acts as a guanine nucleotide exchange factor (GEF) for RhoA GTPases. Its activation induces formation of actin stress fibers. Also acts as a GEF for RAC1, inducing production of reactive oxygen species (ROS). Does not act as a GEF for CDC42. The G protein beta-gamma (Gbetagamma) subunits of heterotrimeric G proteins act as activators, explaining the integrated effects of LPA and other G-protein coupled receptor agonists on actin stress fiber formation, cell shape change and ROS production. Required for EPB41L4B-mediated regulation of the circumferential actomyosin belt in epithelial cells. This chain is Rho guanine nucleotide exchange factor 18 (ARHGEF18), found in Homo sapiens (Human).